Reading from the N-terminus, the 125-residue chain is Small ribosomal subunit protein uS13 (125 aa).

The disordered stretch occupies residues 92-125; it reads RRSLPARGQNTQTNARTRKGRRKTVAGKKKAVKK. The segment covering 107–125 has biased composition (basic residues); that stretch reads RTRKGRRKTVAGKKKAVKK.

This sequence belongs to the universal ribosomal protein uS13 family. As to quaternary structure, part of the 30S ribosomal subunit. Forms a loose heterodimer with protein S19. Forms two bridges to the 50S subunit in the 70S ribosome.

In terms of biological role, located at the top of the head of the 30S subunit, it contacts several helices of the 16S rRNA. In the 70S ribosome it contacts the 23S rRNA (bridge B1a) and protein L5 of the 50S subunit (bridge B1b), connecting the 2 subunits; these bridges are implicated in subunit movement. Contacts the tRNAs in the A and P-sites. This is Small ribosomal subunit protein uS13 from Chlorobium phaeobacteroides (strain BS1).